Here is a 434-residue protein sequence, read N- to C-terminus: Glutamyl-tRNA reductase (434 aa).

Substrate-binding positions include 49–52 (TCNR), S109, 114–116 (EPQ), and Q120. C50 serves as the catalytic Nucleophile. 189 to 194 (GAGEMC) lines the NADP(+) pocket.

It belongs to the glutamyl-tRNA reductase family. As to quaternary structure, homodimer.

The enzyme catalyses (S)-4-amino-5-oxopentanoate + tRNA(Glu) + NADP(+) = L-glutamyl-tRNA(Glu) + NADPH + H(+). It functions in the pathway porphyrin-containing compound metabolism; protoporphyrin-IX biosynthesis; 5-aminolevulinate from L-glutamyl-tRNA(Glu): step 1/2. In terms of biological role, catalyzes the NADPH-dependent reduction of glutamyl-tRNA(Glu) to glutamate 1-semialdehyde (GSA). The chain is Glutamyl-tRNA reductase from Geobacter metallireducens (strain ATCC 53774 / DSM 7210 / GS-15).